The following is a 241-amino-acid chain: Methylthioribulose-1-phosphate dehydratase (241 aa).

Cys-96 is a substrate binding site. Zn(2+)-binding residues include His-114 and His-116. The active-site Proton donor/acceptor is Glu-138. His-194 serves as a coordination point for Zn(2+).

It belongs to the aldolase class II family. MtnB subfamily. The cofactor is Zn(2+).

The protein localises to the cytoplasm. It carries out the reaction 5-(methylsulfanyl)-D-ribulose 1-phosphate = 5-methylsulfanyl-2,3-dioxopentyl phosphate + H2O. The protein operates within amino-acid biosynthesis; L-methionine biosynthesis via salvage pathway; L-methionine from S-methyl-5-thio-alpha-D-ribose 1-phosphate: step 2/6. Functionally, catalyzes the dehydration of methylthioribulose-1-phosphate (MTRu-1-P) into 2,3-diketo-5-methylthiopentyl-1-phosphate (DK-MTP-1-P). Functions in the methionine salvage pathway. May play a role in apoptosis. The protein is Methylthioribulose-1-phosphate dehydratase of Danio rerio (Zebrafish).